A 221-amino-acid chain; its full sequence is Orotate phosphoribosyltransferase (221 aa).

K26 contacts 5-phospho-alpha-D-ribose 1-diphosphate. 34 to 35 provides a ligand contact to orotate; that stretch reads FF. 5-phospho-alpha-D-ribose 1-diphosphate contacts are provided by residues 72–73, R98, K99, K102, H104, and 123–131; these read YK and DDVISAGTS. Residues S127 and R155 each coordinate orotate.

This sequence belongs to the purine/pyrimidine phosphoribosyltransferase family. PyrE subfamily. Homodimer. The cofactor is Mg(2+).

The catalysed reaction is orotidine 5'-phosphate + diphosphate = orotate + 5-phospho-alpha-D-ribose 1-diphosphate. Its pathway is pyrimidine metabolism; UMP biosynthesis via de novo pathway; UMP from orotate: step 1/2. Catalyzes the transfer of a ribosyl phosphate group from 5-phosphoribose 1-diphosphate to orotate, leading to the formation of orotidine monophosphate (OMP). The sequence is that of Orotate phosphoribosyltransferase from Herminiimonas arsenicoxydans.